A 23-amino-acid chain; its full sequence is Fimbrial protein (23 aa).

The cysteines at positions 8 and 21 are disulfide-linked.

It belongs to the N-Me-Phe pilin family. As to quaternary structure, the pili are polar flexible filaments of about 5.4 nanometers diameter and 2.5 micrometers average length; they consist of only a single polypeptide chain arranged in a helical configuration of five subunits per turn in the assembled pilus.

Its subcellular location is the fimbrium. The chain is Fimbrial protein (pil) from Pseudomonas aeruginosa.